The primary structure comprises 599 residues: rRNA (cytosine-C(5))-methyltransferase NOP2C (599 aa).

The region spanning 158-265 (PKEVLVSRKC…IAVDLNHRVF (108 aa)) is the PUA domain. S-adenosyl-L-methionine-binding positions include 304–310 (CAAPGGK), aspartate 328, and aspartate 355. The tract at residues 372 to 454 (LINGDNSSSM…GGRAGKSQGF (83 aa)) is disordered. A compositionally biased stretch (low complexity) spans 378 to 388 (SSSMTSHSELS). Residues 399–412 (RRSEADKSCEKNDS) show a composition bias toward basic and acidic residues. The span at 413-424 (TEQPNGGDNVSQ) shows a compositional bias: polar residues. Residues 428-438 (RKNKGRLKNGR) show a composition bias toward basic residues. Aspartate 465 contributes to the S-adenosyl-L-methionine binding site. Cysteine 516 acts as the Nucleophile in catalysis.

Belongs to the class I-like SAM-binding methyltransferase superfamily. RsmB/NOP family.

It is found in the nucleus. The protein resides in the nucleolus. The enzyme catalyses a cytidine in rRNA + S-adenosyl-L-methionine = a 5-methylcytidine in rRNA + S-adenosyl-L-homocysteine + H(+). In terms of biological role, involved in ribosomal large subunit assembly. S-adenosyl-L-methionine-dependent methyltransferase that may methylates the C(5) position of cytosine in rRNA. May play a role in the regulation of the cell cycle and the increased nucleolar activity that is associated with the cell proliferation. Seems involved in the regulation of cell proliferation. This chain is rRNA (cytosine-C(5))-methyltransferase NOP2C, found in Arabidopsis thaliana (Mouse-ear cress).